An 888-amino-acid chain; its full sequence is Valine--tRNA ligase (888 aa).

The 'HIGH' region motif lies at 43–53; that stretch reads PNVTGTLHLGH. The 'KMSKS' region motif lies at 538–542; sequence KMSKS. Lys541 is an ATP binding site. A coiled-coil region spans residues 821 to 888; the sequence is LIDLDAERAR…RLKAALGRLA (68 aa).

The protein belongs to the class-I aminoacyl-tRNA synthetase family. ValS type 1 subfamily. In terms of assembly, monomer.

The protein resides in the cytoplasm. The catalysed reaction is tRNA(Val) + L-valine + ATP = L-valyl-tRNA(Val) + AMP + diphosphate. Catalyzes the attachment of valine to tRNA(Val). As ValRS can inadvertently accommodate and process structurally similar amino acids such as threonine, to avoid such errors, it has a 'posttransfer' editing activity that hydrolyzes mischarged Thr-tRNA(Val) in a tRNA-dependent manner. This Gluconobacter oxydans (strain 621H) (Gluconobacter suboxydans) protein is Valine--tRNA ligase.